The sequence spans 309 residues: Dihydroorotate dehydrogenase B (NAD(+)), catalytic subunit (309 aa).

FMN is bound by residues serine 21 and 45–46; that span reads KA. Substrate-binding positions include lysine 45 and 69 to 73; that span reads NAIGL. 2 residues coordinate FMN: asparagine 99 and asparagine 127. Substrate is bound at residue asparagine 127. The Nucleophile role is filled by cysteine 130. FMN-binding residues include lysine 165 and isoleucine 191. Residue 192 to 193 participates in substrate binding; sequence NT. FMN is bound by residues glycine 217, 243 to 244, and 265 to 266; these read GG and GT.

It belongs to the dihydroorotate dehydrogenase family. Type 1 subfamily. In terms of assembly, heterotetramer of 2 PyrK and 2 PyrD type B subunits. Requires FMN as cofactor.

It localises to the cytoplasm. The enzyme catalyses (S)-dihydroorotate + NAD(+) = orotate + NADH + H(+). It participates in pyrimidine metabolism; UMP biosynthesis via de novo pathway; orotate from (S)-dihydroorotate (NAD(+) route): step 1/1. Its function is as follows. Catalyzes the conversion of dihydroorotate to orotate with NAD(+) as electron acceptor. This Bacillus cereus (strain ATCC 14579 / DSM 31 / CCUG 7414 / JCM 2152 / NBRC 15305 / NCIMB 9373 / NCTC 2599 / NRRL B-3711) protein is Dihydroorotate dehydrogenase B (NAD(+)), catalytic subunit (pyrD).